The following is a 75-amino-acid chain: Small ribosomal subunit protein bS18c (75 aa).

Belongs to the bacterial ribosomal protein bS18 family. Part of the 30S ribosomal subunit.

Its subcellular location is the plastid. It is found in the chloroplast. This chain is Small ribosomal subunit protein bS18c (rps18), found in Marchantia polymorpha (Common liverwort).